The sequence spans 606 residues: Kelch-like protein 26 (606 aa).

Positions methionine 1–serine 19 are enriched in low complexity. Positions methionine 1 to leucine 20 are disordered. The residue at position 2 (alanine 2) is an N-acetylalanine. In terms of domain architecture, BTB spans leucine 54–leucine 121. In terms of domain architecture, BACK spans cysteine 156–glutamine 257. Kelch repeat units follow at residues serine 301–asparagine 352, phenylalanine 353–glycine 404, leucine 406–glycine 451, arginine 452–glycine 499, isoleucine 501–arginine 550, and isoleucine 552–leucine 599. Phosphoserine is present on serine 430.

In terms of biological role, may play a role in endo(sarco)plasmic reticulum (ER/SR) mitochondrial signaling. May be part of the ubiquitin-proteasome system (UPS) and affect ubiquitination and degradation of target substrates in cardiomyocytes. This is Kelch-like protein 26 (Klhl26) from Mus musculus (Mouse).